The sequence spans 808 residues: Copal-8-ol diphosphate hydratase, chloroplastic (808 aa).

The N-terminal 50 residues, 1–50, are a transit peptide targeting the chloroplast; that stretch reads MAFTFTSAHLFLPVTENHSVHVNYSIPPGNWRLWSTAKGGSNKLDIRRLR. A coiled-coil region spans residues 190-219; that stretch reads DKCQKGLKFFRDNISKLEKENVEASAQMLS. Position 256 (lysine 256) interacts with substrate. Aspartate 391 and aspartate 393 together coordinate Mg(2+). Residues 391-394 carry the DXDD motif motif; it reads DLDD. Lysine 477 contacts substrate.

This sequence belongs to the terpene synthase family. Mg(2+) serves as cofactor. As to expression, expressed in stems, leaves and trichomes. Not detected in roots and seeds. Higher expression in young leaves than in fully expanded leaves.

The protein localises to the plastid. Its subcellular location is the chloroplast. The catalysed reaction is (2E,6E,10E)-geranylgeranyl diphosphate + H2O = 8-hydroxycopalyl diphosphate. Its pathway is secondary metabolite biosynthesis; terpenoid biosynthesis. Involved in the biosynthesis of oxygen-containing labdane-type diterpenes that may be implicated in direct and indirect defense mechanisms. No activity with geranyl diphosphate or farnesyl diphosphate as substrate. The protein is Copal-8-ol diphosphate hydratase, chloroplastic of Cistus creticus subsp. creticus (Rock rose).